The following is a 122-amino-acid chain: Large ribosomal subunit protein uL14 (122 aa).

Belongs to the universal ribosomal protein uL14 family. Part of the 50S ribosomal subunit. Forms a cluster with proteins L3 and L19. In the 70S ribosome, L14 and L19 interact and together make contacts with the 16S rRNA in bridges B5 and B8.

Functionally, binds to 23S rRNA. Forms part of two intersubunit bridges in the 70S ribosome. This Phenylobacterium zucineum (strain HLK1) protein is Large ribosomal subunit protein uL14.